Here is a 384-residue protein sequence, read N- to C-terminus: S-adenosylmethionine synthase (384 aa).

His15 provides a ligand contact to ATP. Residue Asp17 participates in Mg(2+) binding. K(+) is bound at residue Glu43. L-methionine-binding residues include Glu56 and Gln99. The tract at residues 99-109 (QSPDINQGVDR) is flexible loop. ATP-binding positions include 164 to 166 (DAK), 230 to 231 (RF), Asp239, 245 to 246 (RK), Ala262, and Lys266. Asp239 is a binding site for L-methionine. Lys270 serves as a coordination point for L-methionine.

It belongs to the AdoMet synthase family. Homotetramer; dimer of dimers. The cofactor is Mg(2+). K(+) is required as a cofactor.

The protein resides in the cytoplasm. It catalyses the reaction L-methionine + ATP + H2O = S-adenosyl-L-methionine + phosphate + diphosphate. It functions in the pathway amino-acid biosynthesis; S-adenosyl-L-methionine biosynthesis; S-adenosyl-L-methionine from L-methionine: step 1/1. Its function is as follows. Catalyzes the formation of S-adenosylmethionine (AdoMet) from methionine and ATP. The overall synthetic reaction is composed of two sequential steps, AdoMet formation and the subsequent tripolyphosphate hydrolysis which occurs prior to release of AdoMet from the enzyme. In Photobacterium profundum (strain SS9), this protein is S-adenosylmethionine synthase.